Reading from the N-terminus, the 429-residue chain is Small ribosomal subunit protein uS5m (429 aa).

Residues 108–127 (AGAKKGRGKRTKKKKRKDLN) are disordered. Positions 111–125 (KKGRGKRTKKKKRKD) are enriched in basic residues. An S5 DRBM domain is found at 218 to 282 (FDTRILEVRN…NRAVHHLYYI (65 aa)).

The protein belongs to the universal ribosomal protein uS5 family. Component of the mitochondrial ribosome small subunit (28S) which comprises a 12S rRNA and about 30 distinct proteins.

The protein localises to the mitochondrion. The protein is Small ribosomal subunit protein uS5m (MRPS5) of Pongo abelii (Sumatran orangutan).